Reading from the N-terminus, the 469-residue chain is ATP synthase subunit beta (469 aa).

Residue 155 to 162 (GGAGCGKT) participates in ATP binding.

Belongs to the ATPase alpha/beta chains family. As to quaternary structure, F-type ATPases have 2 components, CF(1) - the catalytic core - and CF(0) - the membrane proton channel. CF(1) has five subunits: alpha(3), beta(3), gamma(1), delta(1), epsilon(1). CF(0) has three main subunits: a(1), b(2) and c(9-12). The alpha and beta chains form an alternating ring which encloses part of the gamma chain. CF(1) is attached to CF(0) by a central stalk formed by the gamma and epsilon chains, while a peripheral stalk is formed by the delta and b chains.

It is found in the cell inner membrane. The catalysed reaction is ATP + H2O + 4 H(+)(in) = ADP + phosphate + 5 H(+)(out). Its function is as follows. Produces ATP from ADP in the presence of a proton gradient across the membrane. The catalytic sites are hosted primarily by the beta subunits. The sequence is that of ATP synthase subunit beta from Syntrophus aciditrophicus (strain SB).